We begin with the raw amino-acid sequence, 330 residues long: Putative [LysW]-L-2-aminoadipate/[LysW]-L-glutamate phosphate reductase (330 aa).

Residue 10 to 13 (SGYI) participates in NADP(+) binding. The active site involves cysteine 142. Position 297 (asparagine 297) interacts with NADP(+).

It belongs to the NAGSA dehydrogenase family. Type 1 subfamily. LysY sub-subfamily.

The protein resides in the cytoplasm. It carries out the reaction [amino-group carrier protein]-C-terminal-N-(1-carboxy-5-oxopentan-1-yl)-L-glutamine + phosphate + NADP(+) = [amino-group carrier protein]-C-terminal-N-(1-carboxy-5-phosphooxy-5-oxopentan-1-yl)-L-glutamine + NADPH + H(+). The catalysed reaction is [amino-group carrier protein]-C-terminal-gamma-(L-glutamyl-5-semialdehyde)-L-glutamate + phosphate + NADP(+) = [amino-group carrier protein]-C-terminal-gamma-(5-phospho-L-glutamyl)-L-glutamate + NADPH + H(+). Its pathway is amino-acid biosynthesis; L-lysine biosynthesis via AAA pathway; L-lysine from L-alpha-aminoadipate (Thermus route): step 3/5. It functions in the pathway amino-acid biosynthesis; L-arginine biosynthesis. In terms of biological role, involved in both the arginine and lysine biosynthetic pathways. The polypeptide is Putative [LysW]-L-2-aminoadipate/[LysW]-L-glutamate phosphate reductase (Pyrococcus furiosus (strain ATCC 43587 / DSM 3638 / JCM 8422 / Vc1)).